The chain runs to 336 residues: GTPase Obg (336 aa).

Positions 1-159 (MKFLDETKVY…KTIWLRLKLI (159 aa)) constitute an Obg domain. The 168-residue stretch at 160–327 (ADAGLVGLPN…ALRALRSVIA (168 aa)) folds into the OBG-type G domain. GTP contacts are provided by residues 166–173 (GLPNAGKS), 191–195 (FTTLH), 212–215 (DIPG), 279–282 (SQID), and 308–310 (SAV). Residues Ser-173 and Thr-193 each coordinate Mg(2+).

It belongs to the TRAFAC class OBG-HflX-like GTPase superfamily. OBG GTPase family. As to quaternary structure, monomer. The cofactor is Mg(2+).

Its subcellular location is the cytoplasm. Functionally, an essential GTPase which binds GTP, GDP and possibly (p)ppGpp with moderate affinity, with high nucleotide exchange rates and a fairly low GTP hydrolysis rate. Plays a role in control of the cell cycle, stress response, ribosome biogenesis and in those bacteria that undergo differentiation, in morphogenesis control. This is GTPase Obg from Rhizobium meliloti (strain 1021) (Ensifer meliloti).